A 362-amino-acid polypeptide reads, in one-letter code: Protein ABHD12B (362 aa).

Belongs to the serine esterase family.

This chain is Protein ABHD12B, found in Homo sapiens (Human).